The sequence spans 389 residues: Cytochrome b (389 aa).

Transmembrane regions (helical) follow at residues 32–52 (FGSLLGICLVLQILTGCFLAM), 76–98 (WIVRYTHANVASFFFIFVYAHIG), 113–133 (LWSIGVIILVLMMAIGFLGYV), and 179–199 (FFSLHYILPFVLAALVVAHFM). Heme b is bound by residues His-82 and His-96. Heme b contacts are provided by His-183 and His-197. An a ubiquinone-binding site is contributed by His-202. Helical transmembrane passes span 225 to 245 (FIFKDLVTIFAFFWILSVIVF), 289 to 309 (LLGVVAMFGSLLILLVLPLTD), 321 to 341 (AMKFFFWFFVVNFIMLFWLGS), and 348 to 368 (YLEIGQLSTTFYFSFFLVIVP).

Belongs to the cytochrome b family. In terms of assembly, fungal cytochrome b-c1 complex contains 10 subunits; 3 respiratory subunits, 2 core proteins and 5 low-molecular weight proteins. Cytochrome b-c1 complex is a homodimer. The cofactor is heme b.

The protein resides in the mitochondrion inner membrane. In terms of biological role, component of the ubiquinol-cytochrome c reductase complex (complex III or cytochrome b-c1 complex) that is part of the mitochondrial respiratory chain. The b-c1 complex mediates electron transfer from ubiquinol to cytochrome c. Contributes to the generation of a proton gradient across the mitochondrial membrane that is then used for ATP synthesis. In Strobilurus tenacellus, this protein is Cytochrome b (COB).